Reading from the N-terminus, the 159-residue chain is MDIRLGNGFDVHAFGPGDHVTLCGVKIPHGQGLVGHSDADVAMHTVTDAIYGALAMGDIGQHFPPSDPQWKGAASDIFLKHAVAQASEQGFEINNVDCTLICEFPKIGPHAQAMREAMARIMGMALSRISVKATTSERLGFTGRGEGIACIATAALVRA.

Residues Asp-10 and His-12 each contribute to the a divalent metal cation site. Residues Asp-10–His-12 and His-36–Ser-37 contribute to the 4-CDP-2-C-methyl-D-erythritol 2-phosphate site. His-44 is a binding site for a divalent metal cation. Residues Asp-58–Gly-60, Thr-134–Glu-137, Phe-141, and Arg-144 contribute to the 4-CDP-2-C-methyl-D-erythritol 2-phosphate site.

The protein belongs to the IspF family. Homotrimer. A divalent metal cation is required as a cofactor.

It carries out the reaction 4-CDP-2-C-methyl-D-erythritol 2-phosphate = 2-C-methyl-D-erythritol 2,4-cyclic diphosphate + CMP. The protein operates within isoprenoid biosynthesis; isopentenyl diphosphate biosynthesis via DXP pathway; isopentenyl diphosphate from 1-deoxy-D-xylulose 5-phosphate: step 4/6. Involved in the biosynthesis of isopentenyl diphosphate (IPP) and dimethylallyl diphosphate (DMAPP), two major building blocks of isoprenoid compounds. Catalyzes the conversion of 4-diphosphocytidyl-2-C-methyl-D-erythritol 2-phosphate (CDP-ME2P) to 2-C-methyl-D-erythritol 2,4-cyclodiphosphate (ME-CPP) with a corresponding release of cytidine 5-monophosphate (CMP). The chain is 2-C-methyl-D-erythritol 2,4-cyclodiphosphate synthase from Roseobacter denitrificans (strain ATCC 33942 / OCh 114) (Erythrobacter sp. (strain OCh 114)).